Reading from the N-terminus, the 333-residue chain is Small GTPase-like protein LIP2 (333 aa).

The segment at 11–288 (NKEHMVAPLC…YKYNTLPQHN (278 aa)) is small GTPase-like. GTP is bound by residues 29–36 (GDSGVGKS), 90–94 (DVSGH), and 160–163 (NKAD). Polar residues predominate over residues 242–253 (SPSSAWSLSHAP). The segment at 242–265 (SPSSAWSLSHAPSQRLDEGTSDED) is disordered.

It belongs to the small GTPase superfamily.

This chain is Small GTPase-like protein LIP2, found in Arabidopsis thaliana (Mouse-ear cress).